Reading from the N-terminus, the 186-residue chain is NADH dehydrogenase [ubiquinone] 1 beta subcomplex subunit 8, mitochondrial (186 aa).

The transit peptide at 1–28 (MAAARAGVLGVRWLQKAARNVVPLGART) directs the protein to the mitochondrion. Residues 133–153 (LFGFVAFMLFMFWVGETYPAY) traverse the membrane as a helical segment.

This sequence belongs to the complex I NDUFB8 subunit family. As to quaternary structure, complex I is composed of 45 different subunits.

Its subcellular location is the mitochondrion inner membrane. Its function is as follows. Accessory subunit of the mitochondrial membrane respiratory chain NADH dehydrogenase (Complex I), that is believed not to be involved in catalysis. Complex I functions in the transfer of electrons from NADH to the respiratory chain. The immediate electron acceptor for the enzyme is believed to be ubiquinone. This is NADH dehydrogenase [ubiquinone] 1 beta subcomplex subunit 8, mitochondrial (NDUFB8) from Bos taurus (Bovine).